Reading from the N-terminus, the 86-residue chain is Sec-independent protein translocase protein TatA (86 aa).

Residues 1 to 21 (MGISIWQLLIILAIVLVLFGA) form a helical membrane-spanning segment.

This sequence belongs to the TatA/E family. The Tat system comprises two distinct complexes: a TatABC complex, containing multiple copies of TatA, TatB and TatC subunits, and a separate TatA complex, containing only TatA subunits. Substrates initially bind to the TatABC complex, which probably triggers association of the separate TatA complex to form the active translocon.

Its subcellular location is the cell inner membrane. Functionally, part of the twin-arginine translocation (Tat) system that transports large folded proteins containing a characteristic twin-arginine motif in their signal peptide across membranes. TatA could form the protein-conducting channel of the Tat system. The protein is Sec-independent protein translocase protein TatA of Hydrogenovibrio crunogenus (strain DSM 25203 / XCL-2) (Thiomicrospira crunogena).